Reading from the N-terminus, the 278-residue chain is Short-chain dehydrogenase/reductase eupG (278 aa).

Leu19, Asp71, and Asn98 together coordinate NADP(+). The active-site Proton donor is the Ser155. The NADP(+) site is built by Tyr188, Lys192, and Thr223. Tyr188 (proton acceptor) is an active-site residue. Lys192 functions as the Lowers pKa of active site Tyr in the catalytic mechanism.

It belongs to the short-chain dehydrogenases/reductases (SDR) family.

It functions in the pathway secondary metabolite biosynthesis; terpenoid biosynthesis. In terms of biological role, short-chain dehydrogenase/reductase; part of the gene cluster that mediates the biosynthesis of eupenifeldin, a bistropolone meroterpenoid that acts as an antitumor agent. The first step of eupenifeldin biosynthesis is the biosynthesis of 3-methylorcinaldehyde performed by the non-reducing polyketide synthase eupA. Oxidative dearomatization of 3-methylorcinaldehyde likely catalyzed by the FAD-dependent monooxygenase eupB is followed by oxidative ring expansion by the 2-oxoglutarate-dependent dioxygenase eupC to provide the first tropolone metabolite, tropolone stipitaldehyde. In parallel, generation of sesquiterpene alpha-humulene from farnesylpyrophosphate (FPP) is catalyzed by the terpene cyclase eupE. The cytochrome P450 monooxygenase eupD then hydroxylates humulene to humulenol. The putative Diels-Alderase eupF probably catalyzes the formation of the tropolone-humulene skeleton by linking humulenol and the polyketide moiety. The short-chain dehydrogenase/reductase eupG and the flavin-dependent monooxygenase eupH are also essential for eupenifeldin biosynthesis and are likely the additional decorating enzymes of the tropolone-humulene skeleton to produce final eupenifeldin or derivatives. The sequence is that of Short-chain dehydrogenase/reductase eupG from Phoma sp.